A 227-amino-acid polypeptide reads, in one-letter code: Cytochrome c oxidase subunit 2 (227 aa).

Topologically, residues 1–14 are mitochondrial intermembrane; sequence MAYPAQMGFQDATS. A helical transmembrane segment spans residues 15-45; that stretch reads PIMEELLYFHDHTLMIVFMISSLVLYTISLM. Topologically, residues 46–59 are mitochondrial matrix; that stretch reads LTTSLTHTNTMNAQ. Residues 60-87 form a helical membrane-spanning segment; the sequence is EVETVWTILPAIICILIALPSLRILYMM. Residues 88–227 are Mitochondrial intermembrane-facing; sequence DEINNPSLTI…YFEKWLLTML (140 aa). Histidine 161, cysteine 196, glutamate 198, cysteine 200, histidine 204, and methionine 207 together coordinate Cu cation. Glutamate 198 is a binding site for Mg(2+). Position 218 is a phosphotyrosine (tyrosine 218).

The protein belongs to the cytochrome c oxidase subunit 2 family. As to quaternary structure, component of the cytochrome c oxidase (complex IV, CIV), a multisubunit enzyme composed of 14 subunits. The complex is composed of a catalytic core of 3 subunits MT-CO1, MT-CO2 and MT-CO3, encoded in the mitochondrial DNA, and 11 supernumerary subunits COX4I, COX5A, COX5B, COX6A, COX6B, COX6C, COX7A, COX7B, COX7C, COX8 and NDUFA4, which are encoded in the nuclear genome. The complex exists as a monomer or a dimer and forms supercomplexes (SCs) in the inner mitochondrial membrane with NADH-ubiquinone oxidoreductase (complex I, CI) and ubiquinol-cytochrome c oxidoreductase (cytochrome b-c1 complex, complex III, CIII), resulting in different assemblies (supercomplex SCI(1)III(2)IV(1) and megacomplex MCI(2)III(2)IV(2)). Found in a complex with TMEM177, COA6, COX18, COX20, SCO1 and SCO2. Interacts with TMEM177 in a COX20-dependent manner. Interacts with COX20. Interacts with COX16. Requires Cu cation as cofactor.

The protein localises to the mitochondrion inner membrane. It catalyses the reaction 4 Fe(II)-[cytochrome c] + O2 + 8 H(+)(in) = 4 Fe(III)-[cytochrome c] + 2 H2O + 4 H(+)(out). In terms of biological role, component of the cytochrome c oxidase, the last enzyme in the mitochondrial electron transport chain which drives oxidative phosphorylation. The respiratory chain contains 3 multisubunit complexes succinate dehydrogenase (complex II, CII), ubiquinol-cytochrome c oxidoreductase (cytochrome b-c1 complex, complex III, CIII) and cytochrome c oxidase (complex IV, CIV), that cooperate to transfer electrons derived from NADH and succinate to molecular oxygen, creating an electrochemical gradient over the inner membrane that drives transmembrane transport and the ATP synthase. Cytochrome c oxidase is the component of the respiratory chain that catalyzes the reduction of oxygen to water. Electrons originating from reduced cytochrome c in the intermembrane space (IMS) are transferred via the dinuclear copper A center (CU(A)) of subunit 2 and heme A of subunit 1 to the active site in subunit 1, a binuclear center (BNC) formed by heme A3 and copper B (CU(B)). The BNC reduces molecular oxygen to 2 water molecules using 4 electrons from cytochrome c in the IMS and 4 protons from the mitochondrial matrix. This is Cytochrome c oxidase subunit 2 (MT-CO2) from Daubentonia madagascariensis (Aye-aye).